Consider the following 62-residue polypeptide: Photosystem II reaction center protein Z (62 aa).

2 consecutive transmembrane segments (helical) span residues 8–28 (SVFALITISFLLVIGVPVVLA) and 41–61 (FSGASLWIGLVFLVGILNSLI).

It belongs to the PsbZ family. In terms of assembly, PSII is composed of 1 copy each of membrane proteins PsbA, PsbB, PsbC, PsbD, PsbE, PsbF, PsbH, PsbI, PsbJ, PsbK, PsbL, PsbM, PsbT, PsbY, PsbZ, Psb30/Ycf12, at least 3 peripheral proteins of the oxygen-evolving complex and a large number of cofactors. It forms dimeric complexes.

It localises to the plastid. The protein localises to the chloroplast thylakoid membrane. Functionally, may control the interaction of photosystem II (PSII) cores with the light-harvesting antenna, regulates electron flow through the 2 photosystem reaction centers. PSII is a light-driven water plastoquinone oxidoreductase, using light energy to abstract electrons from H(2)O, generating a proton gradient subsequently used for ATP formation. The protein is Photosystem II reaction center protein Z of Psilotum nudum (Whisk fern).